The sequence spans 327 residues: MFNDIPVFDYEDIQLIPNKCIITSRSQADTSVTLGKYQFKLPVIPANMQTIIDETIAEQLAKEGYFYIMHRFDEDSRKPFIKRMHEQGLIASISVGVKACEYEFVTSLKEDAPEFITIDIAHGHANSVIDMIKHIKTELPETFVIAGNVGTPEAVRELENAGADATKVGIGPGKVCITKVKTGFGTGGWQLAALRWCAKAARKPIIADGGIRTHGDIAKSIRFGASMVMIGSLFAGHIESPGKTVEVDGETFKEYYGSASEYQKGEHKNVEGKKILLPTKGHLSDTLTEMQQDLQSSISYAGGKDLDSLRHVDYVIVKNSIWNGDSI.

Residue Cys-176 is the Thioimidate intermediate of the active site. Ile-205–Val-228 is a binding site for NADP(+).

It belongs to the IMPDH/GMPR family. GuaC type 2 subfamily.

The catalysed reaction is IMP + NH4(+) + NADP(+) = GMP + NADPH + 2 H(+). Its function is as follows. Catalyzes the irreversible NADPH-dependent deamination of GMP to IMP. It functions in the conversion of nucleobase, nucleoside and nucleotide derivatives of G to A nucleotides, and in maintaining the intracellular balance of A and G nucleotides. The chain is GMP reductase from Streptococcus pyogenes serotype M3 (strain ATCC BAA-595 / MGAS315).